A 243-amino-acid polypeptide reads, in one-letter code: Leucyl/phenylalanyl-tRNA--protein transferase (243 aa).

Belongs to the L/F-transferase family.

It is found in the cytoplasm. The catalysed reaction is N-terminal L-lysyl-[protein] + L-leucyl-tRNA(Leu) = N-terminal L-leucyl-L-lysyl-[protein] + tRNA(Leu) + H(+). The enzyme catalyses N-terminal L-arginyl-[protein] + L-leucyl-tRNA(Leu) = N-terminal L-leucyl-L-arginyl-[protein] + tRNA(Leu) + H(+). It catalyses the reaction L-phenylalanyl-tRNA(Phe) + an N-terminal L-alpha-aminoacyl-[protein] = an N-terminal L-phenylalanyl-L-alpha-aminoacyl-[protein] + tRNA(Phe). Its function is as follows. Functions in the N-end rule pathway of protein degradation where it conjugates Leu, Phe and, less efficiently, Met from aminoacyl-tRNAs to the N-termini of proteins containing an N-terminal arginine or lysine. The polypeptide is Leucyl/phenylalanyl-tRNA--protein transferase (Vibrio cholerae serotype O1 (strain ATCC 39315 / El Tor Inaba N16961)).